A 291-amino-acid polypeptide reads, in one-letter code: tRNA U34 carboxymethyltransferase (291 aa).

Carboxy-S-adenosyl-L-methionine is bound by residues Lys-61, Trp-75, Lys-80, Gly-100, 122 to 124 (DPS), 149 to 150 (VE), Tyr-169, and Arg-284.

It belongs to the class I-like SAM-binding methyltransferase superfamily. CmoB family. Homotetramer.

The enzyme catalyses carboxy-S-adenosyl-L-methionine + 5-hydroxyuridine(34) in tRNA = 5-carboxymethoxyuridine(34) in tRNA + S-adenosyl-L-homocysteine + H(+). Its function is as follows. Catalyzes carboxymethyl transfer from carboxy-S-adenosyl-L-methionine (Cx-SAM) to 5-hydroxyuridine (ho5U) to form 5-carboxymethoxyuridine (cmo5U) at position 34 in tRNAs. This is tRNA U34 carboxymethyltransferase from Campylobacter jejuni subsp. jejuni serotype O:23/36 (strain 81-176).